Consider the following 241-residue polypeptide: Small ribosomal subunit protein uS2 (241 aa).

This sequence belongs to the universal ribosomal protein uS2 family.

This Proteus mirabilis (strain HI4320) protein is Small ribosomal subunit protein uS2.